Reading from the N-terminus, the 877-residue chain is DNA mismatch repair protein MutS (877 aa).

An ATP-binding site is contributed by 630–637 (GPNMAGKS).

Belongs to the DNA mismatch repair MutS family.

Functionally, this protein is involved in the repair of mismatches in DNA. It is possible that it carries out the mismatch recognition step. This protein has a weak ATPase activity. This chain is DNA mismatch repair protein MutS, found in Jannaschia sp. (strain CCS1).